A 290-amino-acid polypeptide reads, in one-letter code: MKYTSAILISAFAATNVFAHGVVTEVQGANGVTLPGLTAIDGTPRDCPNPGCGSEADTAIIRDRELGTSRASALGRTQGGGPVDAAKMIELFMDGASVNKSDVVAARERHAANLARRATLLPRAGGGTSTPKGTEETGVKAATGIAATKGLPTTNDDGTINIVFHQVNQDGAGPLTADIDSTSGGQDVSAFQKAKITTNVPGLGIAGLSAAQTMDFPVAVQMPAGATCSGSVGGANNVCIARLRNAAVTGPFGGSVAFTQSPAARKRAIEYNLAKRRFARSLATDEEDDE.

The signal sequence occupies residues 1 to 19 (MKYTSAILISAFAATNVFA). N-linked (GlcNAc...) asparagine glycosylation is present at asparagine 99. The segment at 121-140 (LPRAGGGTSTPKGTEETGVK) is disordered.

The protein resides in the cytoplasm. Functionally, appressoria-specific virulence factor required for appressorial penetration in host and lesion development. In Pyricularia oryzae (strain 70-15 / ATCC MYA-4617 / FGSC 8958) (Rice blast fungus), this protein is Appressoria-specific virulence factor GAS2.